An 85-amino-acid polypeptide reads, in one-letter code: Protein MC005 (85 aa).

In terms of assembly, interacts with host IKBKG; this interaction prevents NF-kappa-B activation.

Its subcellular location is the host cytoplasm. In terms of biological role, plays a role in the inhibition of the host NF-kappa-B pathway by preventing ubiquitin binding-dependent regulation of host IKBKB activation by IKBKG/NEMO. This is Protein MC005 (MC005L) from Molluscum contagiosum virus subtype 1 (MOCV).